Reading from the N-terminus, the 327-residue chain is E3 ubiquitin ligase RNF121 (327 aa).

Position 2 is an N-acetylalanine (alanine 2). The next 5 membrane-spanning stretches (helical) occupy residues 50–70 (MHAEMVLILIATLVVAQLLLV), 79–99 (SYNMVTLFQMWVVPLYFTVKL), 100–120 (HWWRFLVIWILFSAVTAFVTF), 148–168 (ATGIVGYMAVMFTLFGLNLLF), and 172–192 (PEDAMDFGISLLFYGLYYGVL). Residues 226–276 (CAVCGQQIFVDVSEEGIIENTYRLSCNHVFHEFCIRGWCIVGKKQTCPYCK) form an RING-type; atypical zinc finger. The helical transmembrane segment at 306-326 (LVAWQPVIIGVVQGINYILGL) threads the bilayer.

This sequence belongs to the RNF121 family.

It is found in the endoplasmic reticulum membrane. It carries out the reaction S-ubiquitinyl-[E2 ubiquitin-conjugating enzyme]-L-cysteine + [acceptor protein]-L-lysine = [E2 ubiquitin-conjugating enzyme]-L-cysteine + N(6)-ubiquitinyl-[acceptor protein]-L-lysine.. The protein operates within protein modification; protein ubiquitination. Functionally, E3 ubiquitin ligase which accepts ubiquitin and transfers it to substrates thereby promoting their degradation by the endoplasmic reticulum-associated degradation (ERAD) pathway which is a pathway involved in ubiquitin-dependent degradation of misfolded endoplasmic reticulum proteins. May regulate the unfolded protein response to reduce endoplasmic reticulum stress. This Homo sapiens (Human) protein is E3 ubiquitin ligase RNF121 (RNF121).